The primary structure comprises 346 residues: Dihydroorotase (346 aa).

Residues His-14 and His-16 each coordinate Zn(2+). Substrate-binding positions include 16–18 (HLR) and Asn-42. Zn(2+)-binding residues include Lys-100, His-137, and His-175. Residue Lys-100 is modified to N6-carboxylysine. A substrate-binding site is contributed by His-137. Leu-220 provides a ligand contact to substrate. Residue Asp-248 coordinates Zn(2+). Asp-248 is a catalytic residue. Substrate is bound by residues His-252 and Ala-264.

The protein belongs to the metallo-dependent hydrolases superfamily. DHOase family. Class II DHOase subfamily. Homodimer. Requires Zn(2+) as cofactor.

It carries out the reaction (S)-dihydroorotate + H2O = N-carbamoyl-L-aspartate + H(+). It participates in pyrimidine metabolism; UMP biosynthesis via de novo pathway; (S)-dihydroorotate from bicarbonate: step 3/3. Catalyzes the reversible cyclization of carbamoyl aspartate to dihydroorotate. This Cereibacter sphaeroides (strain ATCC 17025 / ATH 2.4.3) (Rhodobacter sphaeroides) protein is Dihydroorotase.